The sequence spans 196 residues: MKKYLGIVLMALVIAGCTSRVPQTEQPATIEPAVPTPSKPQLPPSESQPLPTPPKIQVPVLDWSAAVTPLVGQMVKTDGIARGSILLLNKLKNNTNGSLQTAQATTALYNALASSGQFTMVSREQLGVARQSLGLSEEDSLESRSKAVGLARYVGAQYVLYADASGDVKSPELSMQLMLVQTGEIVWSGNGTVRQQ.

The N-terminal stretch at 1–16 is a signal peptide; the sequence is MKKYLGIVLMALVIAG. The N-palmitoyl cysteine moiety is linked to residue C17. C17 carries S-diacylglycerol cysteine lipidation. Residues 24-54 form a disordered region; sequence TEQPATIEPAVPTPSKPQLPPSESQPLPTPP. The span at 34-43 shows a compositional bias: pro residues; that stretch reads VPTPSKPQLP.

This sequence belongs to the LpoB family. Interacts with PBP1b.

Its subcellular location is the cell outer membrane. In terms of biological role, regulator of peptidoglycan synthesis that is essential for the function of penicillin-binding protein 1B (PBP1b). The polypeptide is Penicillin-binding protein activator LpoB (Dickeya dadantii (strain 3937) (Erwinia chrysanthemi (strain 3937))).